The chain runs to 463 residues: Serine/threonine-protein kinase sgk-1 (463 aa).

The 258-residue stretch at 135-392 (FDYLTTIGKG…FRDIRDHPFF (258 aa)) folds into the Protein kinase domain. Residues 141 to 149 (IGKGSFGRV) and Lys-164 contribute to the ATP site. The Proton acceptor role is filled by Asp-259. The region spanning 393-463 (LPVDWDKLLN…TFVDTNRVLV (71 aa)) is the AGC-kinase C-terminal domain.

It belongs to the protein kinase superfamily. AGC Ser/Thr protein kinase family. Interacts with pdk-1, akt-1, akt-2 and daf-16. Part of a complex containing sgk-1, akt-1 and akt-2. Interacts with let-92 phosphatase regulatory subunit pptr-1. It depends on Mg(2+) as a cofactor. In terms of tissue distribution, expressed in late embryos just before hatching. At postembryonic stages, expressed in sensory and motor neurons and in the intestine. Highly expressed in the intestine and head and tail neurons.

Its subcellular location is the cytoplasm. It is found in the nucleus. The protein localises to the apical cell membrane. It carries out the reaction L-seryl-[protein] + ATP = O-phospho-L-seryl-[protein] + ADP + H(+). The enzyme catalyses L-threonyl-[protein] + ATP = O-phospho-L-threonyl-[protein] + ADP + H(+). Phosphorylated and activated by pdk-1. Acts downstream of PI3 kinase age-1 and kinase pdk-1 in the daf-2/insulin receptor-like transduction pathway. Essential role in regulating development, stress response, and longevity. Phosphorylates Forkhead-related daf-16 and the longevity-promoting skn-1 transcription factors, which inhibits their entry into the nucleus and antagonizes their function. Promotes the cytoplasmic localization of the transcription factor pqm-1. Plays a role in the intracellular trafficking of proteins such as mig-14 to the cell membrane, and this may be through positively regulating ceramide synthesis. Acts downstream of rict-1 to regulate fat storage, size, development and vitellogenesis. Downstream of age-1 and together with akt-1/2, promotes cell survival during embryonic development. Plays a role in maintaining the gonadal basement membrane through antagonizing akt-1 activity. Does not appear to play a role in immune function. This chain is Serine/threonine-protein kinase sgk-1, found in Caenorhabditis elegans.